The following is a 249-amino-acid chain: Tumor necrosis factor ligand superfamily member 12 (249 aa).

Residues 1–21 (MAARRSQRRRGRRGEPGTALL) lie on the Cytoplasmic side of the membrane. The chain crosses the membrane as a helical; Signal-anchor for type II membrane protein span at residues 22-45 (APLVLSLGLALACLGLLLVVVSLG). Topologically, residues 46–249 (SWATLSAQEP…LTYFGLFQVH (204 aa)) are extracellular. The interval 52–78 (AQEPSQEELTAEDRREPPELNPQTEES) is disordered. The THD domain maps to 107–248 (IAAHYEVHPR…FLTYFGLFQV (142 aa)). N-linked (GlcNAc...) asparagine glycosylation occurs at N139. C191 and C210 are disulfide-bonded.

It belongs to the tumor necrosis factor family. In terms of assembly, homotrimer. Interacts with the angiogenic factor AGGF1/VG5Q. Post-translationally, the soluble form is produced from the membrane form by proteolytic processing. As to expression, widely expressed.

It is found in the cell membrane. The protein resides in the secreted. Its function is as follows. Binds to FN14 and possibly also to TNRFSF12/APO3. Weak inducer of apoptosis in some cell types. Mediates NF-kappa-B activation. Promotes angiogenesis and the proliferation of endothelial cells. Also involved in induction of inflammatory cytokines. Promotes IL8 secretion. The sequence is that of Tumor necrosis factor ligand superfamily member 12 (Tnfsf12) from Mus musculus (Mouse).